Consider the following 179-residue polypeptide: Adenine phosphoribosyltransferase (179 aa).

This sequence belongs to the purine/pyrimidine phosphoribosyltransferase family. As to quaternary structure, homodimer.

The protein resides in the cytoplasm. It catalyses the reaction AMP + diphosphate = 5-phospho-alpha-D-ribose 1-diphosphate + adenine. The protein operates within purine metabolism; AMP biosynthesis via salvage pathway; AMP from adenine: step 1/1. Catalyzes a salvage reaction resulting in the formation of AMP, that is energically less costly than de novo synthesis. This Helicobacter pylori (strain ATCC 700392 / 26695) (Campylobacter pylori) protein is Adenine phosphoribosyltransferase.